A 461-amino-acid chain; its full sequence is MEVIALILAAGQGTRMRSGLPKVLHRIGGLCLLEHVYRLAAALEVRETVIVYGHGGEQALSALGHLPATWIEQKKRRGTGHAVMQAVDRIGDDSTVLVLYGDVPLLRRETVETLLHHAGESSLGLLTVELDNPTGYGRIIRDASGRVLRIVEEKDATPEERAVREVNTGILAVEGAPLKRWLKALRNDNAQGEYYLTDIVAMAVAEGYFIDATHPTSPDEVLGVNDRRQLAELERIYQVHQARALMERGVTLRDPARFDLRGEIVELGRDVEIDVNVILEGRIALGDEVRIGPNVYLKDTVIGPGVAVLANSVIEGAVIGAGSRVGPFARLRPESVLAEGVHIGNFVEVKQSDIAVGSKVNHLSYIGDASIGRGVNVGAGTITCNYDGVAKHRTIIEDGAFIGSDTQLVAPVRVGRNATIGAGSTITRDTPEDCLTLSRARQLSVEGWKRPEKARKESCAE.

The segment at 1 to 227 (MEVIALILAA…PDEVLGVNDR (227 aa)) is pyrophosphorylase. UDP-N-acetyl-alpha-D-glucosamine contacts are provided by residues 8-11 (LAAG), Lys-22, Gln-73, 78-79 (GT), 100-102 (YGD), Gly-137, Glu-152, Asn-167, and Asn-225. Mg(2+) is bound at residue Asp-102. Asn-225 serves as a coordination point for Mg(2+). The segment at 228-248 (RQLAELERIYQVHQARALMER) is linker. The N-acetyltransferase stretch occupies residues 249 to 461 (GVTLRDPARF…EKARKESCAE (213 aa)). Positions 332 and 350 each coordinate UDP-N-acetyl-alpha-D-glucosamine. His-362 serves as the catalytic Proton acceptor. UDP-N-acetyl-alpha-D-glucosamine is bound by residues Tyr-365 and Asn-376. Acetyl-CoA is bound by residues Ala-379, 385 to 386 (NY), Ser-404, Ala-422, and Arg-439.

In the N-terminal section; belongs to the N-acetylglucosamine-1-phosphate uridyltransferase family. This sequence in the C-terminal section; belongs to the transferase hexapeptide repeat family. In terms of assembly, homotrimer. Requires Mg(2+) as cofactor.

The protein localises to the cytoplasm. It catalyses the reaction alpha-D-glucosamine 1-phosphate + acetyl-CoA = N-acetyl-alpha-D-glucosamine 1-phosphate + CoA + H(+). The enzyme catalyses N-acetyl-alpha-D-glucosamine 1-phosphate + UTP + H(+) = UDP-N-acetyl-alpha-D-glucosamine + diphosphate. It participates in nucleotide-sugar biosynthesis; UDP-N-acetyl-alpha-D-glucosamine biosynthesis; N-acetyl-alpha-D-glucosamine 1-phosphate from alpha-D-glucosamine 6-phosphate (route II): step 2/2. It functions in the pathway nucleotide-sugar biosynthesis; UDP-N-acetyl-alpha-D-glucosamine biosynthesis; UDP-N-acetyl-alpha-D-glucosamine from N-acetyl-alpha-D-glucosamine 1-phosphate: step 1/1. Its pathway is bacterial outer membrane biogenesis; LPS lipid A biosynthesis. Its function is as follows. Catalyzes the last two sequential reactions in the de novo biosynthetic pathway for UDP-N-acetylglucosamine (UDP-GlcNAc). The C-terminal domain catalyzes the transfer of acetyl group from acetyl coenzyme A to glucosamine-1-phosphate (GlcN-1-P) to produce N-acetylglucosamine-1-phosphate (GlcNAc-1-P), which is converted into UDP-GlcNAc by the transfer of uridine 5-monophosphate (from uridine 5-triphosphate), a reaction catalyzed by the N-terminal domain. This chain is Bifunctional protein GlmU, found in Methylococcus capsulatus (strain ATCC 33009 / NCIMB 11132 / Bath).